Reading from the N-terminus, the 72-residue chain is Translation initiation factor IF-1 (72 aa).

The S1-like domain maps to 1–72; that stretch reads MAKEDNIEMQ…SKGRIVFRSR (72 aa).

The protein belongs to the IF-1 family. As to quaternary structure, component of the 30S ribosomal translation pre-initiation complex which assembles on the 30S ribosome in the order IF-2 and IF-3, IF-1 and N-formylmethionyl-tRNA(fMet); mRNA recruitment can occur at any time during PIC assembly.

It localises to the cytoplasm. In terms of biological role, one of the essential components for the initiation of protein synthesis. Stabilizes the binding of IF-2 and IF-3 on the 30S subunit to which N-formylmethionyl-tRNA(fMet) subsequently binds. Helps modulate mRNA selection, yielding the 30S pre-initiation complex (PIC). Upon addition of the 50S ribosomal subunit IF-1, IF-2 and IF-3 are released leaving the mature 70S translation initiation complex. The chain is Translation initiation factor IF-1 from Shewanella pealeana (strain ATCC 700345 / ANG-SQ1).